We begin with the raw amino-acid sequence, 993 residues long: Signal peptide, CUB and EGF-like domain-containing protein 3 (993 aa).

Residues 1–20 form the signal peptide; that stretch reads MGSGRVPGLCLLVLLVHARA. Positions 29 to 69 constitute an EGF-like 1; calcium-binding domain; the sequence is DVDECVEGTDNCHIDAICQNTPRSYKCICKSGYTGDGKHCK. 26 disulfides stabilise this stretch: cysteine 33/cysteine 46, cysteine 40/cysteine 55, cysteine 57/cysteine 68, cysteine 74/cysteine 86, cysteine 82/cysteine 95, cysteine 97/cysteine 110, cysteine 116/cysteine 127, cysteine 123/cysteine 136, cysteine 161/cysteine 172, cysteine 168/cysteine 182, cysteine 184/cysteine 197, cysteine 201/cysteine 212, cysteine 208/cysteine 221, cysteine 223/cysteine 236, cysteine 240/cysteine 251, cysteine 247/cysteine 260, cysteine 262/cysteine 275, cysteine 281/cysteine 292, cysteine 288/cysteine 301, cysteine 303/cysteine 316, cysteine 322/cysteine 332, cysteine 328/cysteine 341, cysteine 343/cysteine 355, cysteine 361/cysteine 372, cysteine 368/cysteine 381, and cysteine 383/cysteine 397. One can recognise an EGF-like 2; calcium-binding domain in the interval 70–111; the sequence is DVDECEREDNAGCVHDCVNIPGNYRCTCYDGFHLAHDGHNCL. The EGF-like 3; calcium-binding domain occupies 112–148; that stretch reads DVDECAEGNGGCQQSCVNMMGSYECHCREGFFLSDNQ. EGF-like domains follow at residues 157-198, 199-237, and 238-276; these read EGMN…RDCK, LTCN…KTCI, and ETCA…KTCK. Positions 277-317 constitute an EGF-like 7; calcium-binding domain; that stretch reads DIDECRLNNGGCDHICRNTVGSFECSCKKGYKLLINERNCQ. Residues 318-356 form the EGF-like 8; calcium-binding domain; sequence DIDECSFDRTCDHICVNTPGSFQCLCHRGYLLYGITHCG. Residues 357–398 enclose the EGF-like 9; calcium-binding domain; the sequence is DVDECSINRGGCRFGCINTPGSYQCTCPAGQGRLHWNGKDCT. N-linked (GlcNAc...) asparagine glycosylation is found at asparagine 417, asparagine 464, asparagine 685, asparagine 756, and asparagine 785. 2 disulfides stabilise this stretch: cysteine 804/cysteine 830 and cysteine 857/cysteine 878. A CUB domain is found at 804–916; it reads CGGELGEFTG…RGFQIPYVTY (113 aa).

Forms homooligomers. Forms heterooligomers with SCUBE1 and SCUBE2. Interacts with TGFBR2 through the CUB domain; this interaction does not affect TGFB1-binding to TGFBR2. Interacts with BMP2, BMP4 and BMP7; the interaction is mediated by the CUB domain. Interacts with BMPR1A, BMPR1B and BMPR2; the interaction with BMPR1A and BMPR1B is BMP2- and BMP4-dependent. N-glycosylated. In terms of processing, proteolytic cleavage produces a CUB-containing C-terminal fragment that retains the ability to bind to TGFBR2. This reaction is catalyzed in vitro by MMP2 and, to a lesser extent, by MMP9. As to expression, highly expressed in osteoblasts. In normal lung, mainly expressed in bronchial epithelial cells. Tends to be up-regulated in lung cancer cells.

The protein resides in the secreted. Its subcellular location is the cell surface. In terms of biological role, is a positive regulator of the BMP signaling pathway, required for proper chondrogenesis, osteogenesis and skeletal development. It acts as a coreceptor for BMP ligands, particularly BMP2 and BMP4, facilitating their interactions with BMP type I receptors. It is required for ligand-induced recruitment of BMP receptors to lipid rafts. Binds to TGFBR2 and activates TGFB signaling. In lung cancer cells, could serve as an endogenous autocrine and paracrine ligand of TGFBR2, which could regulate TGFBR2 signaling and hence modulate epithelial-mesenchymal transition and cancer progression. This Homo sapiens (Human) protein is Signal peptide, CUB and EGF-like domain-containing protein 3.